The chain runs to 565 residues: Wee1-like protein kinase 2 (565 aa).

2 stretches are compositionally biased toward basic and acidic residues: residues 1 to 12 (MGDNGDNKELKQ) and 26 to 52 (EGQK…DSEA). Disordered regions lie at residues 1–142 (MGDN…TPGP) and 169–189 (KSNG…EEGK). Position 77 is a phosphoserine (Ser77). Residues 173-175 (KRK) carry the Nuclear localization signal motif. The span at 178–189 (RDLEEAGPEEGK) shows a compositional bias: basic and acidic residues. The Protein kinase domain occupies 214–492 (FLEVEKIGVG…TRSRVLCPSL (279 aa)). Residues 220-228 (IGVGEFGTV) and Lys243 each bind ATP. Positions 317 to 331 (KLKDILLQISLGLKY) match the Nuclear export signal motif. Asp341 serves as the catalytic Proton acceptor. 2 residues coordinate Mg(2+): Asn346 and Asp382. Residues 495–521 (TEELQQQLNLEKFKTATLERELKEVQR) adopt a coiled-coil conformation. The interval 518–565 (EVQRAQSSKEGQSSPGVTGTHTGSRSTRRLVGGKSAKSSSFTWGQSSP) is disordered. 2 stretches are compositionally biased toward polar residues: residues 521 to 534 (RAQS…SPGV) and 553 to 565 (AKSS…QSSP).

This sequence belongs to the protein kinase superfamily. Ser/Thr protein kinase family. WEE1 subfamily. In terms of processing, phosphorylation leads to increase its activity. As to expression, ovary-specific.

The protein resides in the nucleus. It catalyses the reaction L-tyrosyl-[protein] + ATP = O-phospho-L-tyrosyl-[protein] + ADP + H(+). In terms of biological role, oocyte-specific protein tyrosine kinase that phosphorylates and inhibits CDK1 and acts as a key regulator of meiosis during both prophase I and metaphase II. Required to maintain meiotic arrest in oocytes during the germinal vesicle (GV) stage, a long period of quiescence at dictyate prophase I, by phosphorylating CDK1 at 'Tyr-15', leading to inhibit CDK1 activity and prevent meiotic reentry. Also required for metaphase II exit during egg activation by phosphorylating CDK1 at 'Tyr-15', to ensure exit from meiosis in oocytes and promote pronuclear formation. The sequence is that of Wee1-like protein kinase 2 (WEE2) from Sus scrofa (Pig).